Here is an 868-residue protein sequence, read N- to C-terminus: Leucine--tRNA ligase (868 aa).

A 'HIGH' region motif is present at residues 42 to 52 (PYPSGKLHMGH). The 'KMSKS' region motif lies at 627 to 631 (KMSKS). ATP is bound at residue lysine 630.

Belongs to the class-I aminoacyl-tRNA synthetase family.

The protein localises to the cytoplasm. The enzyme catalyses tRNA(Leu) + L-leucine + ATP = L-leucyl-tRNA(Leu) + AMP + diphosphate. The polypeptide is Leucine--tRNA ligase (Pseudomonas putida (strain W619)).